A 316-amino-acid chain; its full sequence is Protoheme IX farnesyltransferase (316 aa).

The next 9 membrane-spanning stretches (helical) occupy residues 32–52 (VMSLVIFTALTGVLIAPTHVN), 53–73 (PIIGFASLLAIAAGAGASGAL), 98–118 (VARESALAFGMVLALLSVITL), 120–140 (FVANWAAAALLAFTIFFYVVI), 153–173 (IVIGGAAGAFPPIVAYLAVAG), 180–200 (LALFAIIFVWTPPHFWALALV), 226–246 (ILLYTLLLAPIGMTPYFIGFA), 251–271 (GLLSFGLGGVMILHAVRVYLA), and 280–300 (VAMRMFGFSILYLFLLFAAIV).

The protein belongs to the UbiA prenyltransferase family. Protoheme IX farnesyltransferase subfamily.

Its subcellular location is the cell inner membrane. It carries out the reaction heme b + (2E,6E)-farnesyl diphosphate + H2O = Fe(II)-heme o + diphosphate. It participates in porphyrin-containing compound metabolism; heme O biosynthesis; heme O from protoheme: step 1/1. Converts heme B (protoheme IX) to heme O by substitution of the vinyl group on carbon 2 of heme B porphyrin ring with a hydroxyethyl farnesyl side group. This is Protoheme IX farnesyltransferase from Methylocella silvestris (strain DSM 15510 / CIP 108128 / LMG 27833 / NCIMB 13906 / BL2).